The sequence spans 390 residues: S-adenosylmethionine synthase 1 (390 aa).

A Mg(2+)-binding site is contributed by Glu-9. Position 15 (His-15) interacts with ATP. Glu-43 contributes to the K(+) binding site. L-methionine-binding residues include Glu-56 and Gln-99. ATP-binding positions include 167 to 169 (DGK), 235 to 238 (SGRF), Asp-246, 252 to 253 (RK), Ala-269, Lys-273, and Lys-277. Asp-246 lines the L-methionine pocket. Lys-277 lines the L-methionine pocket.

Belongs to the AdoMet synthase family. Homotetramer. Mn(2+) is required as a cofactor. Requires Mg(2+) as cofactor. The cofactor is Co(2+). K(+) serves as cofactor.

It localises to the cytoplasm. The enzyme catalyses L-methionine + ATP + H2O = S-adenosyl-L-methionine + phosphate + diphosphate. It participates in amino-acid biosynthesis; S-adenosyl-L-methionine biosynthesis; S-adenosyl-L-methionine from L-methionine: step 1/1. In terms of biological role, catalyzes the formation of S-adenosylmethionine from methionine and ATP. The reaction comprises two steps that are both catalyzed by the same enzyme: formation of S-adenosylmethionine (AdoMet) and triphosphate, and subsequent hydrolysis of the triphosphate. The polypeptide is S-adenosylmethionine synthase 1 (SAM1) (Actinidia chinensis var. chinensis (Chinese soft-hair kiwi)).